A 56-amino-acid polypeptide reads, in one-letter code: Large ribosomal subunit protein bL33A (56 aa).

The protein belongs to the bacterial ribosomal protein bL33 family.

The polypeptide is Large ribosomal subunit protein bL33A (Nocardia farcinica (strain IFM 10152)).